The chain runs to 322 residues: MATSSAAAAASTPVNANTITETKNSTFFFDFMMGGVSAAVSKTAAAPIERVKLLIQNQDEMIRAGRLSHRYKGIGECFKRTAAEEGVISLWRGNTANVLRYFPTQALNFAFKDKFKKMFGYKKERDGYAKWFAGNLASGGAAGAASLLFVYSLDYARTRLANDAKSAKKGGERQFNGLVDVYRKTYRSDGLRGLYRGFGPSVVGIVVYRGLYFGMYDTLKPVVLVGPLEGNFLASFLLGWAVTTGSGVASYPLDTIRRRMMMTSGEAVKYSSSFECGRQILAKEGARSFFKGAGANILRGVAGAGVLSIYDQVQLLMFGKKF.

3 Solcar repeats span residues 25 to 118, 130 to 222, and 230 to 316; these read STFF…FKKM, KWFA…LKPV, and GNFL…VQLL. Helical transmembrane passes span 27-54, 95-119, 128-148, 198-219, and 233-253; these read FFFD…VKLL, TANV…KKMF, YAKW…ASLL, FGPS…YDTL, and LASF…SYPL. Residues Arg100 and Lys112 each contribute to the ADP site. An ADP-binding site is contributed by Arg257. Residues 257-262 form an important for transport activity region; it reads RRRMMM. Residues 257–262 carry the Nucleotide carrier signature motif motif; that stretch reads RRRMMM. Residues 293-313 form a helical membrane-spanning segment; that stretch reads AGANILRGVAGAGVLSIYDQV.

It belongs to the mitochondrial carrier (TC 2.A.29) family. Monomer.

Its subcellular location is the mitochondrion inner membrane. It catalyses the reaction ADP(in) + ATP(out) = ADP(out) + ATP(in). Its activity is regulated as follows. The matrix-open state (m-state) is inhibited by the membrane-permeable bongkrekic acid (BKA). The cytoplasmic-open state (c-state) is inhibited by the membrane-impermeable toxic inhibitor carboxyatractyloside (CATR). Its function is as follows. ADP:ATP antiporter that mediates import of ADP into the mitochondrial matrix for ATP synthesis, and export of ATP out to fuel the cell. Cycles between the cytoplasmic-open state (c-state) and the matrix-open state (m-state): operates by the alternating access mechanism with a single substrate-binding site intermittently exposed to either the cytosolic (c-state) or matrix (m-state) side of the inner mitochondrial membrane. This chain is ADP,ATP carrier protein (anc1), found in Schizosaccharomyces pombe (strain 972 / ATCC 24843) (Fission yeast).